Reading from the N-terminus, the 447-residue chain is Gamma-glutamyl phosphate reductase (447 aa).

It belongs to the gamma-glutamyl phosphate reductase family.

It is found in the cytoplasm. The enzyme catalyses L-glutamate 5-semialdehyde + phosphate + NADP(+) = L-glutamyl 5-phosphate + NADPH + H(+). Its pathway is amino-acid biosynthesis; L-proline biosynthesis; L-glutamate 5-semialdehyde from L-glutamate: step 2/2. Catalyzes the NADPH-dependent reduction of L-glutamate 5-phosphate into L-glutamate 5-semialdehyde and phosphate. The product spontaneously undergoes cyclization to form 1-pyrroline-5-carboxylate. In Methanosarcina barkeri (strain Fusaro / DSM 804), this protein is Gamma-glutamyl phosphate reductase.